The primary structure comprises 418 residues: Serine hydroxymethyltransferase (418 aa).

(6S)-5,6,7,8-tetrahydrofolate is bound by residues Leu121 and 125–127; that span reads GHL. At Lys230 the chain carries N6-(pyridoxal phosphate)lysine. 355 to 357 is a binding site for (6S)-5,6,7,8-tetrahydrofolate; it reads SPF.

This sequence belongs to the SHMT family. As to quaternary structure, homodimer. It depends on pyridoxal 5'-phosphate as a cofactor.

It localises to the cytoplasm. The enzyme catalyses (6R)-5,10-methylene-5,6,7,8-tetrahydrofolate + glycine + H2O = (6S)-5,6,7,8-tetrahydrofolate + L-serine. Its pathway is one-carbon metabolism; tetrahydrofolate interconversion. It functions in the pathway amino-acid biosynthesis; glycine biosynthesis; glycine from L-serine: step 1/1. Its function is as follows. Catalyzes the reversible interconversion of serine and glycine with tetrahydrofolate (THF) serving as the one-carbon carrier. This reaction serves as the major source of one-carbon groups required for the biosynthesis of purines, thymidylate, methionine, and other important biomolecules. Also exhibits THF-independent aldolase activity toward beta-hydroxyamino acids, producing glycine and aldehydes, via a retro-aldol mechanism. The chain is Serine hydroxymethyltransferase from Streptococcus agalactiae serotype V (strain ATCC BAA-611 / 2603 V/R).